The sequence spans 4582 residues: MSTNPPQPPPSSTIASNPPQPIATPMSTTNPSQPTITSSSAASSSSSSSSGNPVNFESYARRCFELNNNNEQTQLLALVTEIRDNIELVHTVEYPTFLNFLFPVFYNILRQGAVQFNDGPEQKIRNTILDILNKLPNNELLRPHILVLLQLSMYLLEVDNEENALVCLRIIIELHKNYRNALESEIQPFLNIVLKLYTDLPSTIEKTFSSSSSASLSTTTTAISPTTTTTTTPATATTPATTTATGNTITTPPPATPPSTTATAISPTSSTTTTTTATTAAAATIATTTATTTITPPLPPYMIKSIESFKILTECPIVVILLFQLYNSYMSSNVPKFIPLIIETLSLQAPANSTVTHHSQYVDFIAAQVKTLYLLAYVLKWHIEQIKQYSDRFPRSVIQLLQNCPAHSSAIRKELLVTLRHILSSDFKSKFIVYLDLLLDEKIILGTSRTSYESLRSMAYGSLADFIHNMRNELNINQISKVVAIYSRHLHDQTNPVSIQIMSVKLIISLMDVIQRKQDPPEYKSRSIIYKVIESFINKFSSLKRSIPKLLADQQKEKEKELKDPQSLKDKLDGLSSANTTTSSTGEIIILDPVKDTRTLIKTMTSSLRNIFWSLSACPINKPGTGITTGAGATTTTTTNTNNTIIPPVRIALPSIEESLLFIKLFKSTVKCFPIYGGCNPSPQEEKEMIENFTASFMMLDQRTFQEVSTFILPFLYQRSLNNPSLLLIPQGFLSVTQMNPTGVQINRVFLEVLTPFLYEKIRNLQPTDKPDICMIKLIKLIFNAIQPNNNSGVGGSGGSNSSGGGGGGGSNSSNNSTNSNTTTNIDSTCVQQVLSSMILILLKLITESKQIDSIQYLLLLKTIFKSCTRPDQSKEITLLFPIILETLNDLLLSSSHSTMIPAVQQLLIELSLSIPVQIATLLPSLHLLVKPLMLALDSSSSELLSTTFRILELIVDNATGDFLLFTFRDNKSEFLQILSKHLRPAPYFYGPHAIRILGKMAGKSRSFSVLSPILSIDSTSNSRSIPSSNKNNNNNNYYYNGSCSNSENYSKVFKLLLPCETGDDKTKSIPLDKSIQSIKNILLYQLDDSYLQSNAYSLLKYYISLYLSSQDFLINQQSLLNELLNNLKQSNNNNNNNSSTVNLNIIELDNENENENDNNNNNNNNNNNNNNNNNNNNNNNNNNNNNNNNNNNNIKTFKTKEEYLNEIKNFKDLVYCLFLSITNDHLKEKFDSLKFLNNFIYHFVLYLSTFKFNYSIISMKELDPKIFLEALVDVMSMSSHNIINQSNIEDLQTISTSKFNKAHITSLLDMIFNCSNQIFSENSNSKKNNELMTSSTDVKDGEKVEMETEDSLKKDEMSAAATSEIKKETNVVVENEQDKDTVLISPIFKYLVKLFIKCCYDKDFSVKGAGLIGIEYIIENVKLSWIQPFQHLILKSLLFVCEDLSYSGYQPTIDYASEIIINLIKLCVPNLNIVPDSMEIDQSTTTASTTETAATTTTTETATPMVTESTAIVTEPTATTPTATPTSTPTSTSTPTPTPIPTATTSSTTTAPTTTTTTTTNLSSSSTINQKPHCKLNQLKLKDRELLKLILEILMERITSWSGHTRSLAQRMLTMISVEITKIPMSQLIEDLKMTVQKLLPKTPLKSLSISLQTGVIDGLTFCLSQKPSPLIEIGADTVRVLQECLNVAGDESSPTQQSQIKSSSAKSISATNNLRVCGVEMVATAMTCPDFLQFECLEFKNRIIRMFFKVVTARNKEMAMAAKRGLANSIQQQRLHRDLLQTCLRPVLSNITDPKSLSVPFLQGLSRLLELLSNCFNAALGEKLFEYLKKFEEAGKLSYLANKYRDSEEVKICASIIDIFHLLPPAAKLLDSTIILTIRLEQSLCKEVTSPYREPLIRFLAKYPQRTIEIFMGQLPQFNLIFRLILKHQPLSKPIVEELANTYSIWLEAHLKSPSADIRFHTLSMVSIIRKQLPNWLPENRKVLDILIEYWRPLSHMIQSASNPLDISNQTLRETKIIVKCFLQYCKAHSEETDLYFYMLSVLTLRASMDFNFLRDYYQHDLAPSSTIEQKKKIIQTFLIFFKDQTIPSDNKVQAIQNLITPILTNYFHQTDRNSSSGGGIIEDSLFIQLTKQTLETEVKASYDDTLLIELLQLETLLVKNLSSVLVDCRKELIKFAWNHLKNEDLTCKQSAYILACGFIEAYETPHKIVLQVYVPLLRAYQPESKHLVKQALDILMPCFKTRLPGGDPKNSTWVKWTKKIIVEEGHTTAQLVHIIQLIVRHPQLFYPSRSQFVPHIILLLPKIALGSNLTAENKKLSIDIADTIIIWEKMRMSNLQQSIKTSSSSLPTTTTTTTSSNKPTDSSSLPPNTPIAEGSITTPSQGGVATPNVSDSTPTPGIHHGATNIDDEYRPPLSAIEHISLFLIRMASNWYHINEKCSELLRQTLVIWPETNIKFSVFEKPMNTDQPQMISTCLSMLNLIAEYQVNTFIPNNVVALQQSLLQALNSDNAKISSLLGSLFKKILAAFPLPTNNTTTTTPVSSTTTTEQSSDSSSLPPPPPVQVTKPIPNEMVSFYTFIGTQFEMILGAFDKNYNLSILSNIKVFSDHSESFIDPYISLIVKVLIRLTRNYLSQDSDGGTGSLANKPLSSSGSTSQTGGASQTATSASNVVLKKSNSEIISGLCKTYGFLKTKTTKLNSDQRNAFIQSLLVLIERSNDVELLSEIIKVVDYLISISPSPSPSTTPVVTETTIPSTTTTTTTAATTTTTTTPSTTTTAATTTTAPTTTETTTTAATTTITPFLTIKEKINFLIKLGRVDQLSNAELSLSYYKLVLSFYSESNSSSKQELSQLEPCFMMGLRNTVDQGMRKSLFNILHKSIGTTPYQRLNYIIGVQQWDILGTTYWIKHALDLLLAILPNDKFVKISNFCSKLPTSLKFANRNGNDINQQQQQQQQQQQQQQQQQQQQQQQQQQQQQQQQQQQQQQHHQQEQPMEIDENLVVEQSSSVNKGNEEFKKSLKLHTQWLESLKNEESLKFSEFNENLRELIFIDSHLVNDLWCHLFSDMWSDLTKEEQFKLSKSLTLLLSKDYTKKVPLVSKPIIPPTSIPISKPIITTTTSTSSSTSTTTPITTIPLINNSQLITIVTLTQQQTNPIIVPSLREPNVIKTWMETLGMCKPIPKVPIEVISFLGENYNCWYYAIRMIEQQLIDRQKLLDSTDINWDYLSYLYGAIGEKDLLYGIYRKRYQCDETKLGLLLEQFYMFQSSQEVFLSAMNKYSAVGCKPTPRSENLLWEDHWLECAKRLNQWNFVHEFSKEKNMYDLTIESAWKIPQWNSVKENMKKMMSQGDTSIRKILQGYFLTNEKRYHEVDPAIVTSNQLILDKWVSLPERSFRSHTNSLVEMQQVVELQESVHILKEISNITLSQQPADLSRSFLTSNYIKSIFNIWRERLPNKDEDLLIWFELMAWRQQVFNIIGTPSMNGGIGANPVTPTNTTTTITNPDGTTTTTTTPLPPPQQPINQIEFASPRYMVLEMAWTMNKYSHIVRKHNIIEVCLNSLSKMFDLQIELHDIFLNLKEQIKCYLQLPTHYDTGISIINSTNLDFFTPMQKGEFLQLKGEFLNRLGRYDEANQSFASSVSQYENSAKNWISWAHFCDNQFTNHSSSSITPSSTPTTYDIKTQWAESAISCYIQGIKCDPKYGSRYVPRIFWLLYLNGSGEVPQQIQTQQQQQQAAAQGGLPPQPRKLTPAQSVFQSFLNSWTILPQWIWLNYMPQLISGAANLLNFPGYGFLCWQMIGKICYLFPNSSYYHFRKLVLEMKSNASKFTTSPPTTTTTATTTTTATTTITTATTTSTPTQTTPTQNTTTPIKEESSTTTATTTPAVPSTSTPTSTSAPAPISTSTNTPPNATTTTPQANTTSPPPPSSTFSPLKMTETLSLGLHQYHSCLINEIDMMLGSFSILSGSIPAVYQFNGSLNQILLEAFKLNKIEDSIYNSIRSLYKHYFVNEIKYQNSKEFLEAYKSEFKVDFIEFNLDDIVSDTIKKESDQETNVVEGTTNVSKELETTSEKQQQQQQQLPTISILLLIEKLIKWIDRKPDNSLITVVNTDQSTNYYGIDTMICLESICPQLVNFKPSILEIPGQYNTNRDPNIENNVKVEKVGMFAKLIKHSNGMVCPRITLYGGNGKAYQFLIESSPSLINGITNSNNNNVARVYERKNQLLGSINSMLIKNRETRRRGLTLNSYPTVVPIKNSLTMIQNIGNDSIKQLAEVWYTHSNQSNLFKPMLKYKEMLLNSNLHTELLSKKDQDGDLEFTNITEDNNISSSSSSSSSSGSNSGENSPIIDSSKLVVFREMSKEIGDELMINYIQSTLLPTNYQDQYEFKLNFSNQFGLHSLLQYILFSDIGDIDPSKIYLTKSTGSVYYNDWSLKLTNRKLGFDLLQDNPYNQQQLLRLSPNIRNYLGPLYLEGSYLSSMISTCICLSDLKDQLVNSINLFIFDEYMCMNNVEPLQQSEQNKDRNIHYEFIDKTTATVHQMLENRIDSLTPSSQPDKTCFISPIVKKVNQLIQNSLSSNISQLDQLSCPWL.

Over residues 1–11 the composition is skewed to pro residues; it reads MSTNPPQPPPS. Disordered stretches follow at residues 1–52, 219–276, 556–581, 794–821, 1152–1195, 1483–1570, 2341–2410, 2537–2567, 2637–2662, and 2741–2789; these read MSTN…SSGN, TTTA…TTTT, KEKE…ANTT, VGGS…TNSN, ENEN…NNNI, QSTT…STIN, SIKT…NIDD, TTTT…QVTK, SDGG…GGAS, and SPST…TTTE. Residues 25-37 are compositionally biased toward polar residues; it reads PMSTTNPSQPTIT. 3 stretches are compositionally biased toward low complexity: residues 38–50, 219–250, and 258–276; these read SSSA…SSSS, TTTA…NTIT, and PSTT…TTTT. Over residues 556-573 the composition is skewed to basic and acidic residues; the sequence is KEKEKELKDPQSLKDKLD. Residues 794-811 show a composition bias toward gly residues; that stretch reads VGGSGGSNSSGGGGGGGS. Composition is skewed to low complexity over residues 812–821, 1158–1194, 1484–1504, 1515–1568, and 2341–2367; these read NSSNNSTNSN, DNNN…NNNN, STTT…ETAT, TEPT…SSST, and SIKT…DSSS. The segment covering 2378 to 2398 has biased composition (polar residues); the sequence is SITTPSQGGVATPNVSDSTPT. 2 stretches are compositionally biased toward low complexity: residues 2537-2556 and 2650-2662; these read TTTT…DSSS and SSSG…GGAS. Residues 2944-2991 are a coiled coil; that stretch reads NDINQQQQQQQQQQQQQQQQQQQQQQQQQQQQQQQQQQQQQQHHQQEQ. The FAT domain occupies 3185–3815; it reads VISFLGENYN…YYHFRKLVLE (631 aa). Composition is skewed to low complexity over residues 3491 to 3509 and 3824 to 3916; these read TNTT…TTTT and TTSP…ANTT. Disordered regions lie at residues 3491 to 3517 and 3821 to 3928; these read TNTT…PQQP and SKFT…FSPL. The PI3K/PI4K catalytic domain maps to 4171–4541; the sequence is VCPRITLYGG…MLENRIDSLT (371 aa). Positions 4177-4183 are G-loop; it reads LYGGNGK. The disordered stretch occupies residues 4312–4337; sequence NITEDNNISSSSSSSSSSGSNSGENS. Residues 4320–4337 are compositionally biased toward low complexity; that stretch reads SSSSSSSSSSGSNSGENS. The tract at residues 4400 to 4408 is catalytic loop; that stretch reads DIGDIDPSK. Residues 4429–4451 form an activation loop region; that stretch reads NRKLGFDLLQDNPYNQQQLLRLS. One can recognise an FATC domain in the interval 4538 to 4582; that stretch reads DSLTPSSQPDKTCFISPIVKKVNQLIQNSLSSNISQLDQLSCPWL.

This sequence belongs to the PI3/PI4-kinase family. TRA1 subfamily.

The polypeptide is Probable transcription-associated protein 1 (tra1) (Dictyostelium discoideum (Social amoeba)).